The primary structure comprises 233 residues: Choline-phosphate cytidylyltransferase (233 aa).

Positions 6, 8, 9, 80, 85, and 101 each coordinate CDP-choline. Asp-102 lines the Mg(2+) pocket. Tyr-187 provides a ligand contact to CDP-choline. Mg(2+) contacts are provided by Glu-213 and Asp-215.

Belongs to the LicC/PntC cytidylyltransferase family. The cofactor is Mg(2+).

It carries out the reaction phosphocholine + CTP + H(+) = CDP-choline + diphosphate. The protein operates within lipopolysaccharide biosynthesis. Its function is as follows. Cytidylyltransferase involved in the biosynthesis of lipopolysaccharides (LPS), a necessary component and antigenic determinant of the outer membrane that has been shown to be an important factor in the host-parasite interaction in a number of Gram-negative species. Catalyzes the activation of phosphocholine (P-Cho) to CDP-choline (CDP-Cho). LicC is critical for the expression of the 6A2-specific epitope. This chain is Choline-phosphate cytidylyltransferase, found in Haemophilus influenzae (strain ATCC 51907 / DSM 11121 / KW20 / Rd).